A 785-amino-acid polypeptide reads, in one-letter code: Cadherin-7 (785 aa).

The signal sequence occupies residues 1–27 (MKLGKVEFCHFLQLIALFLCFSGMSQA). A propeptide spanning residues 28–47 (ELSRSRSKPYFQSGRSRTKR) is cleaved from the precursor. Residues 28-607 (ELSRSRSKPY…AYVLPAGLST (580 aa)) are Extracellular-facing. Cadherin domains follow at residues 49 to 153 (WVWN…EPKF), 154 to 262 (LDGP…PPRF), 263 to 377 (PRRS…PPVF), 378 to 482 (SSPL…APEF), and 482 to 599 (FAMD…AEAY). Asn-449 and Asn-530 each carry an N-linked (GlcNAc...) asparagine glycan. The helical transmembrane segment at 608 to 628 (GALIAILACVLTLLVLILLIV) threads the bilayer. Topologically, residues 629-785 (TMRRRKKEPL…YGTGQESLYS (157 aa)) are cytoplasmic.

It localises to the cell membrane. Its function is as follows. Cadherins are calcium-dependent cell adhesion proteins. They preferentially interact with themselves in a homophilic manner in connecting cells; cadherins may thus contribute to the sorting of heterogeneous cell types. The protein is Cadherin-7 (CDH7) of Homo sapiens (Human).